The sequence spans 206 residues: Ras-related protein Rab-18 (206 aa).

12 residues coordinate GTP: Ser17, Gly20, Lys21, Ser22, Ser23, Asp34, Pro35, Thr40, Gly66, Lys123, Asp125, and Ala152. Ser22 contacts Mg(2+). 2 short sequence motifs (switch) span residues 31–45 and 63–80; these read DTFDPELAATIGVDF and DTAGQERFRTLTPSYYRG. Residue Thr40 coordinates Mg(2+). Cys199 carries S-palmitoyl cysteine lipidation. At Cys203 the chain carries Cysteine methyl ester. Residue Cys203 is the site of S-geranylgeranyl cysteine attachment. Positions 204 to 206 are cleaved as a propeptide — removed in mature form; it reads SML.

This sequence belongs to the small GTPase superfamily. Rab family. Mg(2+) serves as cofactor.

It localises to the endoplasmic reticulum membrane. It is found in the golgi apparatus. The protein localises to the cis-Golgi network membrane. Its subcellular location is the lipid droplet. The protein resides in the apical cell membrane. It carries out the reaction GTP + H2O = GDP + phosphate + H(+). Its activity is regulated as follows. Regulated by guanine nucleotide exchange factors (GEFs) which promote the exchange of bound GDP for free GTP. Regulated by GTPase activating proteins (GAPs) which increase the GTP hydrolysis activity at the ER membrane. Inhibited by GDP dissociation inhibitors (GDIs) which prevent Rab-GDP dissociation. The small GTPases Rab are key regulators of intracellular membrane trafficking, from the formation of transport vesicles to their fusion with membranes. Rabs cycle between an inactive GDP-bound form and an active GTP-bound form that is able to recruit to membranes different sets of downstream effectors directly responsible for vesicle formation, movement, tethering and fusion. RAB18 is required for the localization of ZFYVE1 to lipid droplets and for its function in mediating the formation of endoplasmic reticulum-lipid droplets (ER-LD) contacts. Also required for maintaining endoplasmic reticulum structure. Plays a role in apical endocytosis/recycling. Plays a key role in eye and brain development and neurodegeneration. This chain is Ras-related protein Rab-18 (RAB18), found in Gallus gallus (Chicken).